A 149-amino-acid polypeptide reads, in one-letter code: 3-dehydroquinate dehydratase (149 aa).

Tyrosine 26 serves as the catalytic Proton acceptor. The substrate site is built by asparagine 75, histidine 81, and aspartate 88. The active-site Proton donor is the histidine 101. Substrate-binding positions include 102–103 and arginine 112; that span reads LS.

Belongs to the type-II 3-dehydroquinase family. As to quaternary structure, homododecamer.

It catalyses the reaction 3-dehydroquinate = 3-dehydroshikimate + H2O. It participates in metabolic intermediate biosynthesis; chorismate biosynthesis; chorismate from D-erythrose 4-phosphate and phosphoenolpyruvate: step 3/7. In terms of biological role, catalyzes a trans-dehydration via an enolate intermediate. This chain is 3-dehydroquinate dehydratase, found in Shewanella woodyi (strain ATCC 51908 / MS32).